Reading from the N-terminus, the 376-residue chain is Chaperone protein DnaJ (376 aa).

Positions Asp-5–Gly-70 constitute a J domain. The CR-type zinc finger occupies Gly-132–Thr-210. Residues Cys-145, Cys-148, Cys-162, Cys-165, Cys-184, Cys-187, Cys-198, and Cys-201 each coordinate Zn(2+). CXXCXGXG motif repeat units lie at residues Cys-145 to Gly-152, Cys-162 to Gly-169, Cys-184 to Gly-191, and Cys-198 to Gly-205.

Belongs to the DnaJ family. Homodimer. Zn(2+) serves as cofactor.

The protein localises to the cytoplasm. Functionally, participates actively in the response to hyperosmotic and heat shock by preventing the aggregation of stress-denatured proteins and by disaggregating proteins, also in an autonomous, DnaK-independent fashion. Unfolded proteins bind initially to DnaJ; upon interaction with the DnaJ-bound protein, DnaK hydrolyzes its bound ATP, resulting in the formation of a stable complex. GrpE releases ADP from DnaK; ATP binding to DnaK triggers the release of the substrate protein, thus completing the reaction cycle. Several rounds of ATP-dependent interactions between DnaJ, DnaK and GrpE are required for fully efficient folding. Also involved, together with DnaK and GrpE, in the DNA replication of plasmids through activation of initiation proteins. This is Chaperone protein DnaJ from Shewanella amazonensis (strain ATCC BAA-1098 / SB2B).